The chain runs to 187 residues: Elongation factor P (187 aa).

Belongs to the elongation factor P family.

The protein resides in the cytoplasm. Its pathway is protein biosynthesis; polypeptide chain elongation. In terms of biological role, involved in peptide bond synthesis. Stimulates efficient translation and peptide-bond synthesis on native or reconstituted 70S ribosomes in vitro. Probably functions indirectly by altering the affinity of the ribosome for aminoacyl-tRNA, thus increasing their reactivity as acceptors for peptidyl transferase. The chain is Elongation factor P from Magnetococcus marinus (strain ATCC BAA-1437 / JCM 17883 / MC-1).